A 181-amino-acid chain; its full sequence is Adenylate kinase (181 aa).

10 to 15 (GAGKGT) serves as a coordination point for ATP. An NMP region spans residues 30–59 (STGDLFRANISQGTELGKQAQEYMDAGKLV). Residues threonine 31, arginine 36, 57–59 (KLV), 85–88 (GFPR), and glutamine 92 each bind AMP. The segment at 126–132 (SRGRNDD) is LID. Arginine 127 provides a ligand contact to ATP. Residues arginine 129 and arginine 140 each contribute to the AMP site. Glycine 166 serves as a coordination point for ATP.

It belongs to the adenylate kinase family. As to quaternary structure, monomer.

It localises to the cytoplasm. It catalyses the reaction AMP + ATP = 2 ADP. The protein operates within purine metabolism; AMP biosynthesis via salvage pathway; AMP from ADP: step 1/1. Functionally, catalyzes the reversible transfer of the terminal phosphate group between ATP and AMP. Plays an important role in cellular energy homeostasis and in adenine nucleotide metabolism. This chain is Adenylate kinase, found in Corynebacterium urealyticum (strain ATCC 43042 / DSM 7109).